Reading from the N-terminus, the 536-residue chain is Apolipoprotein N-acyltransferase (536 aa).

Helical transmembrane passes span 34-54, 64-84, 89-109, 129-149, 172-192, and 199-219; these read PLWW…RPGA, ALIG…WLFI, YGAL…AFLA, GAAL…GSLW, YVGV…CVQW, and HWPM…AAVQ. The region spanning 244–487 is the CN hydrolase domain; it reads LQGNIAQDEK…RGVLRGQVHG (244 aa). Glu283 serves as the catalytic Proton acceptor. Lys345 is an active-site residue. Cys395 acts as the Nucleophile in catalysis. A helical membrane pass occupies residues 503-523; the sequence is WWVARWGLWPLWALAALALAW.

It belongs to the CN hydrolase family. Apolipoprotein N-acyltransferase subfamily.

The protein localises to the cell inner membrane. The enzyme catalyses N-terminal S-1,2-diacyl-sn-glyceryl-L-cysteinyl-[lipoprotein] + a glycerophospholipid = N-acyl-S-1,2-diacyl-sn-glyceryl-L-cysteinyl-[lipoprotein] + a 2-acyl-sn-glycero-3-phospholipid + H(+). It functions in the pathway protein modification; lipoprotein biosynthesis (N-acyl transfer). Catalyzes the phospholipid dependent N-acylation of the N-terminal cysteine of apolipoprotein, the last step in lipoprotein maturation. The protein is Apolipoprotein N-acyltransferase of Verminephrobacter eiseniae (strain EF01-2).